A 273-amino-acid polypeptide reads, in one-letter code: Mitochondrial distribution and morphology protein 12 (273 aa).

Positions 1-273 constitute an SMP-LTD domain; it reads MSIDFDWSKL…LVWPSYITIE (273 aa). A disordered region spans residues 124-145; that stretch reads LTSPIPESRPSTPMDNHQERDR.

Belongs to the MDM12 family. Component of the ER-mitochondria encounter structure (ERMES) or MDM complex, composed of mmm1, mdm10, mdm12 and mdm34. A mmm1 homodimer associates with one molecule of mdm12 on each side in a pairwise head-to-tail manner, and the SMP-LTD domains of mmm1 and mdm12 generate a continuous hydrophobic tunnel for phospholipid trafficking.

The protein localises to the mitochondrion outer membrane. It is found in the endoplasmic reticulum membrane. Component of the ERMES/MDM complex, which serves as a molecular tether to connect the endoplasmic reticulum (ER) and mitochondria. Components of this complex are involved in the control of mitochondrial shape and protein biogenesis, and function in nonvesicular lipid trafficking between the ER and mitochondria. Mdm12 is required for the interaction of the ER-resident membrane protein mmm1 and the outer mitochondrial membrane-resident beta-barrel protein mdm10. The mdm12-mmm1 subcomplex functions in the major beta-barrel assembly pathway that is responsible for biogenesis of all mitochondrial outer membrane beta-barrel proteins, and acts in a late step after the SAM complex. The mdm10-mdm12-mmm1 subcomplex further acts in the TOM40-specific pathway after the action of the mdm12-mmm1 complex. Essential for establishing and maintaining the structure of mitochondria and maintenance of mtDNA nucleoids. This is Mitochondrial distribution and morphology protein 12 from Schizosaccharomyces pombe (strain 972 / ATCC 24843) (Fission yeast).